The sequence spans 405 residues: MSKKVNKNASPKNNSDSESKTIIYRPNTIDCDRIDIADWNKDGKQWNAWLNYQDPNLNSNTKILLQTKTIELKHHGIPRIGEGEDAFIKSDADREYIKIPLTPGEPGCEELEQQFQALDEYFSSDEMRTKLFGKRANGYKYVTCVKTPKIKDESDSDSDDEDTKKKKKNTKNKGKQEGPPVKYIKAKFHMIQDNGKKINRTKLIKSSGGKKEEVNADTVTEIANEVRFLSKTKYIMHVNRIWAAKSVLLGADKKMYSLGVKVMAIEYTPGASTGLNSKNLAFMSDDEDEEEVVKPTKSPNKSSQKQKQKLDSDDEDSDNEKEKEKEEDDEEEHKSSNKSSNKKSKKQDDDEDDEEEGEKIEVKKSSKKSSKKASKKQDSDEEDEEEVAKPKKKSSKAKSPSKSRS.

3 disordered regions span residues 1–21 (MSKKVNKNASPKNNSDSESKT), 150–179 (IKDESDSDSDDEDTKKKKKNTKNKGKQEGP), and 285–405 (DDED…KSRS). A compositionally biased stretch (polar residues) spans 7–16 (KNASPKNNSD). 2 stretches are compositionally biased toward acidic residues: residues 312–331 (SDDEDSDNEKEKEKEEDDEE) and 349–358 (DDEDDEEEGE). Basic residues-rich tracts occupy residues 365-374 (SSKKSSKKAS) and 390-405 (PKKKSSKAKSPSKSRS).

This is an uncharacterized protein from Acanthamoeba polyphaga (Amoeba).